The following is a 238-amino-acid chain: Large ribosomal subunit protein uL1 (238 aa).

This sequence belongs to the universal ribosomal protein uL1 family. In terms of assembly, part of the 50S ribosomal subunit.

In terms of biological role, binds directly to 23S rRNA. The L1 stalk is quite mobile in the ribosome, and is involved in E site tRNA release. Protein L1 is also a translational repressor protein, it controls the translation of the L11 operon by binding to its mRNA. In Rippkaea orientalis (strain PCC 8801 / RF-1) (Cyanothece sp. (strain PCC 8801)), this protein is Large ribosomal subunit protein uL1.